The chain runs to 152 residues: Globin, minor (152 aa).

The Globin domain occupies 12–152; it reads VNNSYHKDLL…ALIAVVQAAL (141 aa). Position 104 (His104) interacts with heme b.

This sequence belongs to the globin family.

The sequence is that of Globin, minor from Anadara trapezia (Sydney cockle).